We begin with the raw amino-acid sequence, 412 residues long: Phosphoglycerate kinase 1 (412 aa).

Substrate-binding positions include aspartate 28 to asparagine 30, histidine 65 to arginine 68, arginine 122, and arginine 162. ATP-binding positions include glutamate 336 and glycine 361–threonine 364.

The protein belongs to the phosphoglycerate kinase family. Monomer.

Its subcellular location is the cytoplasm. It catalyses the reaction (2R)-3-phosphoglycerate + ATP = (2R)-3-phospho-glyceroyl phosphate + ADP. It functions in the pathway carbohydrate degradation; glycolysis; pyruvate from D-glyceraldehyde 3-phosphate: step 2/5. The polypeptide is Phosphoglycerate kinase 1 (Methanosarcina acetivorans (strain ATCC 35395 / DSM 2834 / JCM 12185 / C2A)).